Consider the following 169-residue polypeptide: Nucleoside-triphosphatase THEP1 (169 aa).

ATP contacts are provided by residues 11–18 (GEPGVGKT) and 100–107 (IIGIDEIG).

The protein belongs to the THEP1 NTPase family.

The enzyme catalyses a ribonucleoside 5'-triphosphate + H2O = a ribonucleoside 5'-diphosphate + phosphate + H(+). In terms of biological role, has nucleotide phosphatase activity towards ATP, GTP, CTP, TTP and UTP. May hydrolyze nucleoside diphosphates with lower efficiency. This is Nucleoside-triphosphatase THEP1 from Sulfurisphaera tokodaii (strain DSM 16993 / JCM 10545 / NBRC 100140 / 7) (Sulfolobus tokodaii).